We begin with the raw amino-acid sequence, 299 residues long: tRNA dimethylallyltransferase (299 aa).

Gly11–Thr18 is a binding site for ATP. Residue Thr13 to Thr18 participates in substrate binding. Residues Asp36 to Gln39 are interaction with substrate tRNA.

This sequence belongs to the IPP transferase family. As to quaternary structure, monomer. It depends on Mg(2+) as a cofactor.

It catalyses the reaction adenosine(37) in tRNA + dimethylallyl diphosphate = N(6)-dimethylallyladenosine(37) in tRNA + diphosphate. Functionally, catalyzes the transfer of a dimethylallyl group onto the adenine at position 37 in tRNAs that read codons beginning with uridine, leading to the formation of N6-(dimethylallyl)adenosine (i(6)A). The protein is tRNA dimethylallyltransferase of Streptococcus pyogenes serotype M18 (strain MGAS8232).